Consider the following 187-residue polypeptide: GTP cyclohydrolase 1 1 (187 aa).

The protein belongs to the GTP cyclohydrolase I family. In terms of assembly, homomer.

The catalysed reaction is GTP + H2O = 7,8-dihydroneopterin 3'-triphosphate + formate + H(+). It functions in the pathway cofactor biosynthesis; 7,8-dihydroneopterin triphosphate biosynthesis; 7,8-dihydroneopterin triphosphate from GTP: step 1/1. The sequence is that of GTP cyclohydrolase 1 1 from Pseudomonas syringae pv. tomato (strain ATCC BAA-871 / DC3000).